We begin with the raw amino-acid sequence, 350 residues long: 2-oxoisovalerate dehydrogenase subunit beta (350 aa).

In terms of assembly, heterodimer of an alpha and a beta chain. Thiamine diphosphate is required as a cofactor.

The enzyme catalyses N(6)-[(R)-lipoyl]-L-lysyl-[protein] + 3-methyl-2-oxobutanoate + H(+) = N(6)-[(R)-S(8)-2-methylpropanoyldihydrolipoyl]-L-lysyl-[protein] + CO2. Its function is as follows. The branched-chain alpha-keto dehydrogenase complex catalyzes the overall conversion of alpha-keto acids to acyl-CoA and CO(2). It contains multiple copies of three enzymatic components: branched-chain alpha-keto acid decarboxylase (E1), lipoamide acyltransferase (E2) and lipoamide dehydrogenase (E3). This Pseudomonas aeruginosa (strain ATCC 15692 / DSM 22644 / CIP 104116 / JCM 14847 / LMG 12228 / 1C / PRS 101 / PAO1) protein is 2-oxoisovalerate dehydrogenase subunit beta (bkdA2).